A 256-amino-acid chain; its full sequence is Receptor expression-enhancing protein 3 (256 aa).

3 consecutive transmembrane segments (helical) span residues 1 to 21, 42 to 62, and 68 to 88; these read MVSWMISRSVVLVFGNLYPAY, WIVFALFTVVETVADLTIAWF, and IKIAFVIWLLSPYTRGASVIY. The disordered stretch occupies residues 177 to 256; it reads IMDQPDGAEY…NATTYSNMES (80 aa). Over residues 247-256 the composition is skewed to polar residues; sequence NATTYSNMES.

The protein belongs to the DP1 family.

It is found in the endoplasmic reticulum membrane. Microtubule-binding protein required to ensure proper cell division and nuclear envelope reassembly by sequestering the endoplasmic reticulum away from chromosomes during mitosis. Probably acts by clearing the endoplasmic reticulum membrane from metaphase chromosomes. This Danio rerio (Zebrafish) protein is Receptor expression-enhancing protein 3 (reep3).